The primary structure comprises 1063 residues: E3 ubiquitin-protein ligase PDZRN3 (1063 aa).

The RING-type; degenerate zinc-finger motif lies at 18–56; sequence CALCHKVLEDPLTTPCGHVFCAGCVLPWVVQEGSCPARC. The TRAF-type zinc finger occupies 100 to 158; it reads EHLERCDFAPARCRHAGCGQLLLRRDVEAHMRDACDARPVGRCQEGCGLPLTHGEQRAG. 2 PDZ domains span residues 249–339 and 419–503; these read TLVL…LRRT and EVGL…IARP. Residue serine 427 is modified to Phosphoserine. The tract at residues 545–602 is disordered; sequence QKKHEEDGGTTDTATILSNQHEKDSGVGRTDESTRNDESSEQENNGEDATASANPLAG. Polar residues predominate over residues 554–563; the sequence is TTDTATILSN. Residues 564–582 are compositionally biased toward basic and acidic residues; the sequence is QHEKDSGVGRTDESTRNDE. Residues 680–705 adopt a coiled-coil conformation; the sequence is ESVDKELELLNEELRSIELECLSIVR. Residues 746–755 show a composition bias toward basic and acidic residues; it reads ELPEKSDKDS. Disordered regions lie at residues 746-798 and 834-853; these read ELPE…IEAY and IKER…PKLG. A compositionally biased stretch (polar residues) spans 756–770; it reads SSAYNTGESCRSTPL.

Interacts with NLGN1 and EFNB2. Interacts with UBE2D2 and with MUSK via the first PDZ domain. In myotubes, the interaction between PDZRN3 and MUSK is enhanced upon agrin stimulation. Post-translationally, auto-ubiquitinated. In terms of tissue distribution, highly expressed in skeletal and cardiac muscle and at lower levels in spinal cord and brain (at protein level). Also expressed in kidney and lung. In muscles, concentrated at the neuromuscular junction (NMJ).

Its subcellular location is the synapse. The protein localises to the cytoplasm. It carries out the reaction S-ubiquitinyl-[E2 ubiquitin-conjugating enzyme]-L-cysteine + [acceptor protein]-L-lysine = [E2 ubiquitin-conjugating enzyme]-L-cysteine + N(6)-ubiquitinyl-[acceptor protein]-L-lysine.. The protein operates within protein modification; protein ubiquitination. Its function is as follows. E3 ubiquitin-protein ligase. Plays an important role in regulating the surface level of MUSK on myotubes. Mediates the ubiquitination of MUSK, promoting its endocytosis and lysosomal degradation. Might contribute to terminal myogenic differentiation. This chain is E3 ubiquitin-protein ligase PDZRN3 (Pdzrn3), found in Mus musculus (Mouse).